Here is a 215-residue protein sequence, read N- to C-terminus: Endoplasmic reticulum vesicle protein 25 (215 aa).

The N-terminal stretch at methionine 1–glycine 21 is a signal peptide. At leucine 22–lysine 184 the chain is on the lumenal side. In terms of domain architecture, GOLD spans proline 34–serine 125. The chain crosses the membrane as a helical span at residues tryptophan 185–leucine 205. The Cytoplasmic portion of the chain corresponds to arginine 206 to isoleucine 215.

The protein belongs to the EMP24/GP25L family.

It localises to the endoplasmic reticulum membrane. The protein resides in the golgi apparatus membrane. Functionally, constituent of COPII-coated endoplasmic reticulum-derived transport vesicles. Required for efficient transport of a subset of secretory proteins to the Golgi. Facilitates retrograde transport from the Golgi to the endoplasmic reticulum. In Candida albicans (strain SC5314 / ATCC MYA-2876) (Yeast), this protein is Endoplasmic reticulum vesicle protein 25 (ERV25).